We begin with the raw amino-acid sequence, 335 residues long: Beta-hexosaminidase (335 aa).

Substrate is bound by residues Asp60, Arg68, Arg133, and 163–164 (KH). Residue His176 is the Proton donor/acceptor of the active site. Catalysis depends on Asp247, which acts as the Nucleophile.

This sequence belongs to the glycosyl hydrolase 3 family. NagZ subfamily.

The protein localises to the cytoplasm. The enzyme catalyses Hydrolysis of terminal non-reducing N-acetyl-D-hexosamine residues in N-acetyl-beta-D-hexosaminides.. The protein operates within cell wall biogenesis; peptidoglycan recycling. Its function is as follows. Plays a role in peptidoglycan recycling by cleaving the terminal beta-1,4-linked N-acetylglucosamine (GlcNAc) from peptide-linked peptidoglycan fragments, giving rise to free GlcNAc, anhydro-N-acetylmuramic acid and anhydro-N-acetylmuramic acid-linked peptides. This is Beta-hexosaminidase from Stenotrophomonas maltophilia (strain R551-3).